Here is a 409-residue protein sequence, read N- to C-terminus: MNIFDNILSSATIFKNRDVLRHSYTPEKLPHREEQINQLALLLSPMLRGGTPSNIFIYGKTGTGKTATVLFVARQLEEASRKAKLNVAVHYINCEIVDTAYRVLASLARKFGSNVPMTGWPTDQVYEEVKKALERRGTRVVVILDEIDKLVKKAEEALYGLTRINSELENSSICIVGISNNLKFKEYLDARILSSLSEEEIVFPPYNAEQLEDILQQRAKLAFEDGVLEDGVIQLCAAIAAQEHGDARKALDLLRVSAEIAERERDSMVRVEHVKKAVRKIETDYMIETVRTLPVHSKILLYSMSLISENSPKFTTGEVYCVYKKLCGKVGVDPLTQRRISDLISELDMLGILNSVVISKGRYGRTREMKLEADEKVLRKALEEDYRLQNLRKFEGELKKLANLNLFQF.

ATP contacts are provided by residues 63 to 67 (TGKTA), tyrosine 206, and arginine 218.

Belongs to the CDC6/cdc18 family.

In terms of biological role, involved in regulation of DNA replication. The chain is ORC1-type DNA replication protein 1 (cdc6-1) from Archaeoglobus fulgidus (strain ATCC 49558 / DSM 4304 / JCM 9628 / NBRC 100126 / VC-16).